A 154-amino-acid chain; its full sequence is Ribonuclease H (154 aa).

The region spanning 1-142 is the RNase H type-1 domain; the sequence is MLKQVEIFTD…CDELARRAAG (142 aa). Mg(2+) is bound by residues Asp10, Glu48, Asp70, and Asp134.

The protein belongs to the RNase H family. As to quaternary structure, monomer. It depends on Mg(2+) as a cofactor.

It is found in the cytoplasm. It carries out the reaction Endonucleolytic cleavage to 5'-phosphomonoester.. Functionally, endonuclease that specifically degrades the RNA of RNA-DNA hybrids. The protein is Ribonuclease H of Edwardsiella ictaluri (strain 93-146).